Consider the following 317-residue polypeptide: Aspartate carbamoyltransferase catalytic subunit (317 aa).

Carbamoyl phosphate-binding residues include Arg65 and Thr66. Lys93 is an L-aspartate binding site. The carbamoyl phosphate site is built by Arg115, His145, and Gln148. 2 residues coordinate L-aspartate: Arg178 and Arg233. Positions 274 and 275 each coordinate carbamoyl phosphate.

Belongs to the aspartate/ornithine carbamoyltransferase superfamily. ATCase family. Heterododecamer (2C3:3R2) of six catalytic PyrB chains organized as two trimers (C3), and six regulatory PyrI chains organized as three dimers (R2).

It catalyses the reaction carbamoyl phosphate + L-aspartate = N-carbamoyl-L-aspartate + phosphate + H(+). Its pathway is pyrimidine metabolism; UMP biosynthesis via de novo pathway; (S)-dihydroorotate from bicarbonate: step 2/3. Functionally, catalyzes the condensation of carbamoyl phosphate and aspartate to form carbamoyl aspartate and inorganic phosphate, the committed step in the de novo pyrimidine nucleotide biosynthesis pathway. The sequence is that of Aspartate carbamoyltransferase catalytic subunit from Bordetella bronchiseptica (strain ATCC BAA-588 / NCTC 13252 / RB50) (Alcaligenes bronchisepticus).